The sequence spans 413 residues: von Willebrand factor A domain-containing protein 1 (413 aa).

Residues 1–20 (MLPWTVIGLALSLRLARSGA) form the signal peptide. One can recognise a VWFA domain in the interval 32-211 (DLLFLLDSSA…ALRGSILDAM (180 aa)). Ser-72, Ser-78, and Ser-91 each carry phosphoserine. Fibronectin type-III domains lie at 212 to 302 (WPQQ…TLPE) and 305 to 395 (GPEL…TPEG). N-linked (GlcNAc...) asparagine glycosylation occurs at Asn-262. Residues 385-413 (ALSAKACTPEGERSRAPRPQPQRTGGREP) are disordered.

Homodimer or homomultimer; disulfide-linked. Interacts with HSPG2. N-glycosylated.

It localises to the secreted. It is found in the extracellular space. Its subcellular location is the extracellular matrix. The protein localises to the basement membrane. Promotes matrix assembly. Involved in the organization of skeletal muscles and in the formation of neuromuscular junctions. This chain is von Willebrand factor A domain-containing protein 1 (VWA1), found in Bos taurus (Bovine).